A 503-amino-acid chain; its full sequence is Probable cytosol aminopeptidase (503 aa).

Mn(2+)-binding residues include K270 and D275. K282 is an active-site residue. Mn(2+) contacts are provided by D293, D352, and E354. Residue R356 is part of the active site.

It belongs to the peptidase M17 family. The cofactor is Mn(2+).

It is found in the cytoplasm. The enzyme catalyses Release of an N-terminal amino acid, Xaa-|-Yaa-, in which Xaa is preferably Leu, but may be other amino acids including Pro although not Arg or Lys, and Yaa may be Pro. Amino acid amides and methyl esters are also readily hydrolyzed, but rates on arylamides are exceedingly low.. It carries out the reaction Release of an N-terminal amino acid, preferentially leucine, but not glutamic or aspartic acids.. Presumably involved in the processing and regular turnover of intracellular proteins. Catalyzes the removal of unsubstituted N-terminal amino acids from various peptides. This is Probable cytosol aminopeptidase from Escherichia coli O139:H28 (strain E24377A / ETEC).